The following is a 160-amino-acid chain: Periplasmic nitrate reductase, electron transfer subunit (160 aa).

The first 25 residues, 1–25 (MKTRIIFAALALAAAMPLLVSGVFA), serve as a signal peptide directing secretion. Positions 73, 87, 90, 91, 108, 127, 130, and 131 each coordinate heme c.

It belongs to the NapB family. As to quaternary structure, component of the periplasmic nitrate reductase NapAB complex composed of NapA and NapB. In terms of processing, binds 2 heme C groups per subunit.

It localises to the periplasm. In terms of biological role, electron transfer subunit of the periplasmic nitrate reductase complex NapAB. Receives electrons from the membrane-anchored tetraheme c-type NapC protein and transfers these to NapA subunit, thus allowing electron flow between membrane and periplasm. Essential for periplasmic nitrate reduction with nitrate as the terminal electron acceptor. The sequence is that of Periplasmic nitrate reductase, electron transfer subunit from Azospirillum brasilense.